The following is a 283-amino-acid chain: ATP synthase gamma chain (283 aa).

Belongs to the ATPase gamma chain family. F-type ATPases have 2 components, CF(1) - the catalytic core - and CF(0) - the membrane proton channel. CF(1) has five subunits: alpha(3), beta(3), gamma(1), delta(1), epsilon(1). CF(0) has three main subunits: a, b and c.

It localises to the cell inner membrane. Its function is as follows. Produces ATP from ADP in the presence of a proton gradient across the membrane. The gamma chain is believed to be important in regulating ATPase activity and the flow of protons through the CF(0) complex. The polypeptide is ATP synthase gamma chain (Ehrlichia ruminantium (strain Welgevonden)).